The following is a 262-amino-acid chain: Hydroxyacylglutathione hydrolase (262 aa).

The Zn(2+) site is built by histidine 53, histidine 55, aspartate 57, histidine 58, histidine 111, aspartate 128, and histidine 166.

The protein belongs to the metallo-beta-lactamase superfamily. Glyoxalase II family. Monomer. Zn(2+) is required as a cofactor.

It carries out the reaction an S-(2-hydroxyacyl)glutathione + H2O = a 2-hydroxy carboxylate + glutathione + H(+). It participates in secondary metabolite metabolism; methylglyoxal degradation; (R)-lactate from methylglyoxal: step 2/2. Thiolesterase that catalyzes the hydrolysis of S-D-lactoyl-glutathione to form glutathione and D-lactic acid. The sequence is that of Hydroxyacylglutathione hydrolase from Nitrosomonas europaea (strain ATCC 19718 / CIP 103999 / KCTC 2705 / NBRC 14298).